The sequence spans 138 residues: Putative pre-16S rRNA nuclease (138 aa).

It belongs to the YqgF nuclease family.

The protein resides in the cytoplasm. Its function is as follows. Could be a nuclease involved in processing of the 5'-end of pre-16S rRNA. The polypeptide is Putative pre-16S rRNA nuclease (Geobacillus sp. (strain WCH70)).